The primary structure comprises 1036 residues: Isoleucine--tRNA ligase (1036 aa).

The 'HIGH' region motif lies at 46–56; sequence PFATGLPHYGH. The 'KMSKS' region signature appears at 589–593; the sequence is KMSKR. An ATP-binding site is contributed by Lys592.

The protein belongs to the class-I aminoacyl-tRNA synthetase family. IleS type 2 subfamily. In terms of assembly, monomer. Requires Zn(2+) as cofactor.

The protein localises to the cytoplasm. The catalysed reaction is tRNA(Ile) + L-isoleucine + ATP = L-isoleucyl-tRNA(Ile) + AMP + diphosphate. Functionally, catalyzes the attachment of isoleucine to tRNA(Ile). As IleRS can inadvertently accommodate and process structurally similar amino acids such as valine, to avoid such errors it has two additional distinct tRNA(Ile)-dependent editing activities. One activity is designated as 'pretransfer' editing and involves the hydrolysis of activated Val-AMP. The other activity is designated 'posttransfer' editing and involves deacylation of mischarged Val-tRNA(Ile). The sequence is that of Isoleucine--tRNA ligase from Chlamydia muridarum (strain MoPn / Nigg).